A 532-amino-acid chain; its full sequence is Membrane protein insertase YidC (532 aa).

5 helical membrane passes run 7 to 27 (FFIF…QSQM), 336 to 356 (LTIL…ITFI), 413 to 433 (GGFL…YMLI), 450 to 470 (LSSQ…MFFI), and 492 to 512 (PVIF…YYII).

The protein belongs to the OXA1/ALB3/YidC family. Type 1 subfamily. Interacts with the Sec translocase complex via SecD. Specifically interacts with transmembrane segments of nascent integral membrane proteins during membrane integration.

It localises to the cell membrane. Required for the insertion and/or proper folding and/or complex formation of integral membrane proteins into the membrane. Involved in integration of membrane proteins that insert both dependently and independently of the Sec translocase complex, as well as at least some lipoproteins. Aids folding of multispanning membrane proteins. This chain is Membrane protein insertase YidC, found in Buchnera aphidicola subsp. Acyrthosiphon pisum (strain APS) (Acyrthosiphon pisum symbiotic bacterium).